Reading from the N-terminus, the 284-residue chain is Dihydropteroate synthase (284 aa).

The Pterin-binding domain maps to Val6–Lys265. Mg(2+) is bound at residue Asn13. (7,8-dihydropterin-6-yl)methyl diphosphate-binding positions include Thr53, Asp86, Asn105, Asp177, Lys213, and Arg253–His255.

This sequence belongs to the DHPS family. In terms of assembly, homodimer. The cofactor is Mg(2+).

The enzyme catalyses (7,8-dihydropterin-6-yl)methyl diphosphate + 4-aminobenzoate = 7,8-dihydropteroate + diphosphate. Its pathway is cofactor biosynthesis; tetrahydrofolate biosynthesis; 7,8-dihydrofolate from 2-amino-4-hydroxy-6-hydroxymethyl-7,8-dihydropteridine diphosphate and 4-aminobenzoate: step 1/2. With respect to regulation, is potently inhibited by the sulfone dapsone and the two sulfonamides sulfamethoxazole and sulfamethoxypyridazine, with Kis in the range of 12 to 32 nM. To a lesser extent, is also inhibited by p-aminosalicylate (PAS). Its function is as follows. Catalyzes the condensation of para-aminobenzoate (pABA) with 6-hydroxymethyl-7,8-dihydropterin diphosphate (DHPt-PP) to form 7,8-dihydropteroate, the immediate precursor of folate derivatives. The protein is Dihydropteroate synthase (folP1) of Mycobacterium leprae (strain TN).